The sequence spans 432 residues: Phosphoprotein associated with glycosphingolipid-enriched microdomains 1 (432 aa).

The Extracellular portion of the chain corresponds to 1–16 (MGPAGSLLGSGQMQIT). Residues 17-37 (LWGSLAAVAIFFVITFLIFLC) form a helical; Signal-anchor for type III membrane protein membrane-spanning segment. S-palmitoyl cysteine attachment occurs at residues Cys37 and Cys40. Topologically, residues 38–432 (SSCDREKKPR…LQQGRDITRL (395 aa)) are cytoplasmic. A phosphoserine mark is found at Ser50 and Ser61. A Phosphotyrosine; by LYN modification is found at Tyr105. Residues 110–122 (TSASDLLDSQDST) are compositionally biased toward polar residues. A disordered region spans residues 110 to 137 (TSASDLLDSQDSTGKPKCHQSRELPRIP). Tyr163, Tyr181, and Tyr227 each carry phosphotyrosine. 2 disordered regions span residues 197 to 230 (EKGH…YASV) and 244 to 432 (SILG…ITRL). The segment covering 220–230 (GKAEFAEYASV) has biased composition (basic and acidic residues). At Ser229 the chain carries Phosphoserine. The span at 316–356 (MYSSVNKPGQLVNKSGQSLTVPESTYTSIQGDPQRSPSSCN) shows a compositional bias: polar residues. At Tyr317 the chain carries Phosphotyrosine; by FYN and LYN. Positions 317–320 (YSSV) are interaction with CSK. Ser354 bears the Phosphoserine mark. Tyr359 is modified (phosphotyrosine). At Ser380 the chain carries Phosphoserine. A phosphotyrosine mark is found at Tyr387 and Tyr417. The tract at residues 430-432 (TRL) is interaction with NHERF1.

In terms of assembly, interacts with FYN. When phosphorylated, interacts with CSK. Interacts with NHERF1/EBP50. In resting T-cells, part of a PAG1-NHERF1-MSN complex which is disrupted upon TCR activation. Interacts with LYN on plasma membrane lipid rafts. Identified in a complex with LYN and STAT3. Post-translationally, palmitoylated. In terms of processing, phosphorylated by FYN on Tyr-317 in resting T-cells; which promotes interaction with CSK. Dephosphorylated by PTPRC/CD45 upon TCR activation; which leads to CSK dissociation. May also be dephosphorylated by PTPN11. Hyperphosphorylated in mast cells upon FCER1 activation. Phosphorylated by LYN. As to expression, ubiquitously expressed. Present in germinal center B-cells, plasma cells, T-cells, monocytes and platelets (at protein level).

The protein resides in the cell membrane. Negatively regulates TCR (T-cell antigen receptor)-mediated signaling in T-cells and FCER1 (high affinity immunoglobulin epsilon receptor)-mediated signaling in mast cells. Promotes CSK activation and recruitment to lipid rafts, which results in LCK inhibition. Inhibits immunological synapse formation by preventing dynamic arrangement of lipid raft proteins. May be involved in cell adhesion signaling. In Homo sapiens (Human), this protein is Phosphoprotein associated with glycosphingolipid-enriched microdomains 1 (PAG1).